A 118-amino-acid polypeptide reads, in one-letter code: V-type proton ATPase subunit G 1 (118 aa).

N-acetylalanine is present on alanine 2. Residues 25–90 (ARKRKARRLK…VQGMQSSQQR (66 aa)) form a disordered region. Basic and acidic residues predominate over residues 35–56 (QAKEEAQMEVEQYRREREHEFQ). Composition is skewed to polar residues over residues 57–69 (SKQQ…QGNL) and 78–89 (RHQVQGMQSSQQ).

Belongs to the V-ATPase G subunit family. V-ATPase is a heteromultimeric enzyme made up of two complexes: the ATP-hydrolytic V1 complex and the proton translocation V0 complex. The V1 complex consists of three catalytic AB heterodimers that form a heterohexamer, three peripheral stalks each consisting of EG heterodimers, one central rotor including subunits D and F, and the regulatory subunits C and H. The proton translocation complex V0 consists of the proton transport subunit a, a ring of proteolipid subunits c9c'', rotary subunit d, subunits e and f, and the accessory subunits ATP6AP1/Ac45 and ATP6AP2/PRR.

It is found in the apical cell membrane. In terms of biological role, subunit of the V1 complex of vacuolar(H+)-ATPase (V-ATPase), a multisubunit enzyme composed of a peripheral complex (V1) that hydrolyzes ATP and a membrane integral complex (V0) that translocates protons. V-ATPase is responsible for acidifying and maintaining the pH of intracellular compartments and in some cell types, is targeted to the plasma membrane, where it is responsible for acidifying the extracellular environment. In aerobic conditions, involved in intracellular iron homeostasis, thus triggering the activity of Fe(2+) prolyl hydroxylase (PHD) enzymes, and leading to HIF1A hydroxylation and subsequent proteasomal degradation. The chain is V-type proton ATPase subunit G 1 (ATP6V1G1) from Pan troglodytes (Chimpanzee).